A 1035-amino-acid polypeptide reads, in one-letter code: MERARKLANRAILKRLVSQSKQSRSNEIPSSSLYRPSRYVSSLSPYTFQARNNAKSFNTQQARSISVEALKPSDTFPRRHNSATPEEQTKMAEFCGFQSLDALIDATVPQSIRSESMKLPKFDSGLTESQMIEHMQNLASKNKVFKSYIGMGYYNTYVPPVILRNLLENPAWYTQYTPYQAEISQGRLESLLNYQTMITDLTGLPMSNASLLDEGTAAAEAMAMCNNILKGKKKTFLIASNCHPQTIDICKTRADGFDLKVVTVDLKDIDYKSGDVCGVLVQYPGTEGEILDYGEFIKNAHAHGVKVVMASDLLALTMLKPPGELGADIVVGSAQRFGVPMGYGGPHAAFLATSQEYKRMMPGRIIGLSVDSTGKPALRMAMQTREQHIRRDKATSNICTAQALLANMAAMYAVYHGPEGLKTIGQRVHGLAGTFSAGLKKLGTVEVQDLPFFDTVKVKCSDAKAIADVANKNDINLRIVDNNTITVSFDETTTLEDVDDLFKVFALGKPVPFTAQSIAQEVENLIPSGLTRETPFLTHQIFNSYHTEHELLRYLHKLQSKDLSLCHSMIPLGSCTMKLNATTEMMPVTWPSFANIHPFAPTEQAAGYQEMFDDLGALLCTITGFDSFSLQPNAGAAGEYAGLMVIRAYHMSRGDHHRNVCIIPVSAHGTNPASAAMCGMKIVAVGTDAKGNINIEELRKAAEANKDNLAALMVTYPSTHGVYEEGIDEICKIIHDNGGQVYMDGANMNAQVGLTSPGFIGADVCHLNLHKTFCIPHGGGGPGMGPIGVKKHLAPYLPSHPVVPTGGIPSPDKSEPLGAISAAPWGSALILPISYTYIAMMGSKGLTDASKIAILSANYMAKRLEKHYPVLFRGVNGTCAHEFIIDLRGFKNTAGIEPEDVAKRLIDYGFHGPTMSWPVPGTLMIEPTESESKAELDRFCDALISIREEIAQIEKGNVDINNNVLKGAPHPPSMLMADAWTKPYSREYAAYPAPWLRSAKFWPTTGRVDNVYGDRNLICTLLPVSEMAEEKAATA.

Residues 1–64 (MERARKLANR…KSFNTQQARS (64 aa)) constitute a mitochondrion transit peptide. Lys-771 is subject to N6-(pyridoxal phosphate)lysine.

It belongs to the GcvP family. In terms of assembly, homodimer. The glycine cleavage system is composed of four proteins: P, T, L and H. Requires pyridoxal 5'-phosphate as cofactor.

It localises to the mitochondrion. It carries out the reaction N(6)-[(R)-lipoyl]-L-lysyl-[glycine-cleavage complex H protein] + glycine + H(+) = N(6)-[(R)-S(8)-aminomethyldihydrolipoyl]-L-lysyl-[glycine-cleavage complex H protein] + CO2. The glycine cleavage system catalyzes the degradation of glycine. The P protein binds the alpha-amino group of glycine through its pyridoxal phosphate cofactor; CO(2) is released and the remaining methylamine moiety is then transferred to the lipoamide cofactor of the H protein. In Solanum tuberosum (Potato), this protein is Glycine dehydrogenase (decarboxylating), mitochondrial (GDCSP).